The chain runs to 135 residues: MARTKQTARKSTGGKAPRKQLATKAARKTPATGGVKKPHRYRPGTVALREIRKYQKSTELLIRKLPFQRLVREIAQDFKTDLRFQSQAVLALQEAAEAYLVGLFEDTNLCAIHAKRVTIMPKDIQLARRIRGERA.

Residues 1 to 40 (MARTKQTARKSTGGKAPRKQLATKAARKTPATGGVKKPHR) form a disordered region. Position 5 is an N6-methyllysine (Lys5). At Lys10 the chain carries N6-acetyllysine; alternate. Position 10 is an N6-methyllysine; alternate (Lys10). Ser11 carries the phosphoserine modification. Thr12 is subject to Phosphothreonine. An N6-acetyllysine mark is found at Lys15, Lys19, and Lys24. Lys28 carries the post-translational modification N6-acetyllysine; alternate. Lys28 is subject to N6-methyllysine; alternate. An N6-methyllysine mark is found at Lys36 and Lys37.

This sequence belongs to the histone H3 family. In terms of assembly, the nucleosome is a histone octamer containing two molecules each of H2A, H2B, H3 and H4 assembled in one H3-H4 heterotetramer and two H2A-H2B heterodimers. The octamer wraps approximately 147 bp of DNA. Acetylation is generally linked to gene activation. Acetylated to form H3K9ac (11%), H3K14ac (17%), H3K18ac (11%), H3K23ac (16%) and H3K27ac (7%). H3K4, H3K35 and H3K36 are not acetylated. H3K4me prevents acetylation. 32% of the histone H3 are acetylated with, on average, 2.4 acetyl-Lys. They are all continuously deacatylated and re-acetylated with a half-life of approximately 2 minutes. In terms of processing, monomethylated to form H3K4me1 (81%), H3K9me1 (16%), H3K27me1 (25%), H3K35me1 (25%) and H3K36me1 (5%). No methylation at H3K14, H3K18 and H3K23. Methylated by a protein complex that includes Mut11. Set1 methylates specifically H3K4. H3K4me1 is associated with silenced euchromatin. Set3 forms H3K9me1, while H3K9me2 is undetected. H3K9me1 is specifically associated with silent, multi-copy transgenes. Post-translationally, no phosphorylation detected.

Its subcellular location is the nucleus. It localises to the chromosome. Functionally, core component of nucleosome. Nucleosomes wrap and compact DNA into chromatin, limiting DNA accessibility to the cellular machineries which require DNA as a template. Histones thereby play a central role in transcription regulation, DNA repair, DNA replication and chromosomal stability. DNA accessibility is regulated via a complex set of post-translational modifications of histones, also called histone code, and nucleosome remodeling. The sequence is that of Histone H3 type 2 (ch3-II) from Chlamydomonas reinhardtii (Chlamydomonas smithii).